The following is a 508-amino-acid chain: Fasciclin-3 (508 aa).

A signal peptide spans 1 to 20 (MSRIVFICLAAILTDALTWA). Glutamine 21 is modified (pyrrolidone carboxylic acid). At 21-346 (QVNVEPNTAL…SSKPPSSSLD (326 aa)) the chain is on the extracellular side. The Ig-like V-type domain occupies 44–106 (GRSINYCRIE…NGQVKCSLGV (63 aa)). 2 consecutive Ig-like C2-type domains span residues 126–223 (PIIE…ESVP) and 236–310 (APVH…GLTL). A disulfide bridge connects residues cysteine 150 and cysteine 211. N-linked (GlcNAc...) asparagine glycosylation is found at asparagine 160, asparagine 257, and asparagine 300. A helical membrane pass occupies residues 347 to 370 (VAAIVGIVVAVAVLVLVVLLIVFA). Residues 371-508 (RATGRWCFGG…QSTSPVWTFK (138 aa)) are Cytoplasmic-facing. Residues 381–439 (KSIKTPTNETSDTESADIKATSTATATTTMGGVGVSAEEEETVNEQESPQEQQQQQQKK) are disordered. Serine 382 bears the Phosphoserine mark. 2 stretches are compositionally biased toward low complexity: residues 400–409 (ATSTATATTT) and 425–437 (EQES…QQQQ). Phosphoserine is present on serine 459.

As to expression, expressed on different subsets of axon bundles (fascicles) in insect embryos.

It localises to the membrane. Mediates cell adhesion in a Ca(2+)-independent manner. It plays a role in axon outgrowth, guidance and fasciculation of the developing nervous system. Function in neurons is essential for adult survival, and is important for climbing behavior and activity. In Drosophila melanogaster (Fruit fly), this protein is Fasciclin-3 (Fas3).